We begin with the raw amino-acid sequence, 234 residues long: Fibrillarin-like rRNA/tRNA 2'-O-methyltransferase (234 aa).

S-adenosyl-L-methionine-binding positions include 90-91, 109-110, 134-135, and 154-157; these read TT, EF, DA, and DIAQ.

This sequence belongs to the methyltransferase superfamily. Fibrillarin family. Interacts with nop5. Component of box C/D small ribonucleoprotein (sRNP) particles that contain rpl7ae, FlpA and nop5, plus a guide RNA.

In terms of biological role, involved in pre-rRNA and tRNA processing. Utilizes the methyl donor S-adenosyl-L-methionine to catalyze the site-specific 2'-hydroxyl methylation of ribose moieties in rRNA and tRNA. Site specificity is provided by a guide RNA that base pairs with the substrate. Methylation occurs at a characteristic distance from the sequence involved in base pairing with the guide RNA. In Staphylothermus marinus (strain ATCC 43588 / DSM 3639 / JCM 9404 / F1), this protein is Fibrillarin-like rRNA/tRNA 2'-O-methyltransferase.